The following is a 133-amino-acid chain: S-adenosylmethionine decarboxylase proenzyme (133 aa).

S63 functions as the Schiff-base intermediate with substrate; via pyruvic acid in the catalytic mechanism. S63 is modified (pyruvic acid (Ser); by autocatalysis). H68 (proton acceptor; for processing activity) is an active-site residue. The active-site Proton donor; for catalytic activity is C83.

Belongs to the prokaryotic AdoMetDC family. Type 1 subfamily. Heterotetramer of two alpha and two beta chains arranged as a dimer of alpha/beta heterodimers. Pyruvate serves as cofactor. In terms of processing, is synthesized initially as an inactive proenzyme. Formation of the active enzyme involves a self-maturation process in which the active site pyruvoyl group is generated from an internal serine residue via an autocatalytic post-translational modification. Two non-identical subunits are generated from the proenzyme in this reaction, and the pyruvate is formed at the N-terminus of the alpha chain, which is derived from the carboxyl end of the proenzyme. The post-translation cleavage follows an unusual pathway, termed non-hydrolytic serinolysis, in which the side chain hydroxyl group of the serine supplies its oxygen atom to form the C-terminus of the beta chain, while the remainder of the serine residue undergoes an oxidative deamination to produce ammonia and the pyruvoyl group blocking the N-terminus of the alpha chain.

It catalyses the reaction S-adenosyl-L-methionine + H(+) = S-adenosyl 3-(methylsulfanyl)propylamine + CO2. Its pathway is amine and polyamine biosynthesis; S-adenosylmethioninamine biosynthesis; S-adenosylmethioninamine from S-adenosyl-L-methionine: step 1/1. Catalyzes the decarboxylation of S-adenosylmethionine to S-adenosylmethioninamine (dcAdoMet), the propylamine donor required for the synthesis of the polyamines spermine and spermidine from the diamine putrescine. The chain is S-adenosylmethionine decarboxylase proenzyme from Acidithiobacillus ferrooxidans (strain ATCC 23270 / DSM 14882 / CIP 104768 / NCIMB 8455) (Ferrobacillus ferrooxidans (strain ATCC 23270)).